Here is a 196-residue protein sequence, read N- to C-terminus: Holliday junction branch migration complex subunit RuvA (196 aa).

The interval 1–63 is domain I; that stretch reads MYDYIKGKLS…DDAHLLFGFH (63 aa). The tract at residues 64–142 is domain II; the sequence is TENEKEIFLN…EASGESATSR (79 aa). Residues 143–148 form a flexible linker region; the sequence is KVSSEQ. A domain III region spans residues 148–196; it reads QNSNLEEAMEALLALGYKATELKKVKAFFEGTNETVEQYIKSSLKMLMK.

This sequence belongs to the RuvA family. As to quaternary structure, homotetramer. Forms an RuvA(8)-RuvB(12)-Holliday junction (HJ) complex. HJ DNA is sandwiched between 2 RuvA tetramers; dsDNA enters through RuvA and exits via RuvB. An RuvB hexamer assembles on each DNA strand where it exits the tetramer. Each RuvB hexamer is contacted by two RuvA subunits (via domain III) on 2 adjacent RuvB subunits; this complex drives branch migration. In the full resolvosome a probable DNA-RuvA(4)-RuvB(12)-RuvC(2) complex forms which resolves the HJ.

The protein resides in the cytoplasm. In terms of biological role, the RuvA-RuvB-RuvC complex processes Holliday junction (HJ) DNA during genetic recombination and DNA repair, while the RuvA-RuvB complex plays an important role in the rescue of blocked DNA replication forks via replication fork reversal (RFR). RuvA specifically binds to HJ cruciform DNA, conferring on it an open structure. The RuvB hexamer acts as an ATP-dependent pump, pulling dsDNA into and through the RuvAB complex. HJ branch migration allows RuvC to scan DNA until it finds its consensus sequence, where it cleaves and resolves the cruciform DNA. The polypeptide is Holliday junction branch migration complex subunit RuvA (Streptococcus agalactiae serotype III (strain NEM316)).